The sequence spans 107 residues: Ribonuclease P protein component 4 (107 aa).

The Zn(2+) site is built by Cys-66, Cys-69, Cys-92, and Cys-95.

The protein belongs to the eukaryotic/archaeal RNase P protein component 4 family. Consists of a catalytic RNA component and at least 4-5 protein subunits. It depends on Zn(2+) as a cofactor.

It localises to the cytoplasm. The catalysed reaction is Endonucleolytic cleavage of RNA, removing 5'-extranucleotides from tRNA precursor.. Functionally, part of ribonuclease P, a protein complex that generates mature tRNA molecules by cleaving their 5'-ends. The protein is Ribonuclease P protein component 4 of Methanosarcina barkeri (strain Fusaro / DSM 804).